A 528-amino-acid chain; its full sequence is Glucose-6-phosphate isomerase (528 aa).

The active-site Proton donor is the Glu-322. Residues His-351 and Lys-455 contribute to the active site.

Belongs to the GPI family.

It is found in the cytoplasm. It catalyses the reaction alpha-D-glucose 6-phosphate = beta-D-fructose 6-phosphate. Its pathway is carbohydrate biosynthesis; gluconeogenesis. It participates in carbohydrate degradation; glycolysis; D-glyceraldehyde 3-phosphate and glycerone phosphate from D-glucose: step 2/4. Functionally, catalyzes the reversible isomerization of glucose-6-phosphate to fructose-6-phosphate. The polypeptide is Glucose-6-phosphate isomerase (Synechococcus elongatus (strain ATCC 33912 / PCC 7942 / FACHB-805) (Anacystis nidulans R2)).